The sequence spans 508 residues: CUGBP Elav-like family member 2 (508 aa).

Necessary for RNA-binding, TNNT2 exon 5 and NMDA R1 exon 21 inclusion stretches follow at residues M1–L283 and L357–Y508. RRM domains follow at residues I40–S123, R132–T212, and A423–S501.

Belongs to the CELF/BRUNOL family. As to quaternary structure, interacts with A1CF. In terms of tissue distribution, expressed in tongue, spleen and brain (at protein level). Expressed in liver, thigh, stomach, lung and heart to very low levels (at protein level). Expressed in heart, brain, lung and muscle.

Its subcellular location is the nucleus. It localises to the cytoplasm. RNA-binding protein implicated in the regulation of several post-transcriptional events. Involved in pre-mRNA alternative splicing, mRNA translation and stability. Mediates exon inclusion and/or exclusion in pre-mRNA that are subject to tissue-specific and developmentally regulated alternative splicing. Specifically activates exon 5 inclusion of TNNT2 in embryonic, but not adult, skeletal muscle. Activates TNNT2 exon 5 inclusion by antagonizing the repressive effect of PTB. Acts both as an activator and as a repressor of a pair of coregulated exons: promotes inclusion of the smooth muscle (SM) exon but exclusion of the non-muscle (NM) exon in actinin pre-mRNAs. Promotes inclusion of exonS 21 and exclusion of exon 5 of the NMDA receptor R1 pre-mRNA. Involved in the apoB RNA editing activity. Increases COX2 mRNA stability and inhibits COX2 mRNA translation in epithelial cells after radiation injury. Modulates the cellular apoptosis program by regulating COX2-mediated prostaglandin E2 (PGE2) expression. Binds to (CUG)n triplet repeats in the 3'-UTR of transcripts such as DMPK. Binds to the muscle-specific splicing enhancer (MSE) intronic sites flanking the TNNT2 alternative exon 5. Binds preferentially to UG-rich sequences, in particular UG repeat and UGUU motifs. Binds to apoB mRNA, specifically to AU-rich sequences located immediately upstream of the edited cytidine. Binds AU-rich sequences in the 3'-UTR of COX2 mRNA. Binds to an intronic RNA element responsible for the silencing of exon 21 splicing. Binds to (CUG)n repeats. May be a specific regulator of miRNA biogenesis. Binds to primary microRNA pri-MIR140 and, with CELF1, negatively regulates the processing to mature miRNA. The sequence is that of CUGBP Elav-like family member 2 (Celf2) from Mus musculus (Mouse).